The primary structure comprises 228 residues: Ribosomal RNA small subunit methyltransferase G (228 aa).

S-adenosyl-L-methionine is bound by residues G89, L94, V140–E141, and R159.

It belongs to the methyltransferase superfamily. RNA methyltransferase RsmG family.

Its subcellular location is the cytoplasm. It catalyses the reaction guanosine(527) in 16S rRNA + S-adenosyl-L-methionine = N(7)-methylguanosine(527) in 16S rRNA + S-adenosyl-L-homocysteine. Functionally, specifically methylates the N7 position of guanine in position 527 of 16S rRNA. In Burkholderia cenocepacia (strain HI2424), this protein is Ribosomal RNA small subunit methyltransferase G.